Consider the following 114-residue polypeptide: Hydrogenase maturation factor HypA (114 aa).

Ni(2+) is bound at residue H2. Residues C73, C76, C90, and C93 each contribute to the Zn(2+) site.

This sequence belongs to the HypA/HybF family.

In terms of biological role, involved in the maturation of [NiFe] hydrogenases. Required for nickel insertion into the metal center of the hydrogenase. The chain is Hydrogenase maturation factor HypA from Klebsiella pneumoniae (strain 342).